Consider the following 297-residue polypeptide: Aspartate carbamoyltransferase catalytic subunit (297 aa).

Arg-52 and Thr-53 together coordinate carbamoyl phosphate. Residue Lys-80 coordinates L-aspartate. Positions 102, 130, and 133 each coordinate carbamoyl phosphate. Arg-167 and Arg-217 together coordinate L-aspartate. Carbamoyl phosphate contacts are provided by Gly-256 and Pro-257.

This sequence belongs to the aspartate/ornithine carbamoyltransferase superfamily. ATCase family. As to quaternary structure, heterododecamer (2C3:3R2) of six catalytic PyrB chains organized as two trimers (C3), and six regulatory PyrI chains organized as three dimers (R2).

It catalyses the reaction carbamoyl phosphate + L-aspartate = N-carbamoyl-L-aspartate + phosphate + H(+). It functions in the pathway pyrimidine metabolism; UMP biosynthesis via de novo pathway; (S)-dihydroorotate from bicarbonate: step 2/3. Its function is as follows. Catalyzes the condensation of carbamoyl phosphate and aspartate to form carbamoyl aspartate and inorganic phosphate, the committed step in the de novo pyrimidine nucleotide biosynthesis pathway. The polypeptide is Aspartate carbamoyltransferase catalytic subunit (Helicobacter hepaticus (strain ATCC 51449 / 3B1)).